The chain runs to 140 residues: ATP synthase epsilon chain (140 aa).

It belongs to the ATPase epsilon chain family. F-type ATPases have 2 components, CF(1) - the catalytic core - and CF(0) - the membrane proton channel. CF(1) has five subunits: alpha(3), beta(3), gamma(1), delta(1), epsilon(1). CF(0) has three main subunits: a, b and c.

The protein resides in the cell inner membrane. Produces ATP from ADP in the presence of a proton gradient across the membrane. This Sodalis glossinidius (strain morsitans) protein is ATP synthase epsilon chain.